The sequence spans 210 residues: Probable glutathione peroxidase 8 (210 aa).

The chain crosses the membrane as a helical span at residues 13-35 (ASRAGLFKVLLSVALCMGSLYLL).

It belongs to the glutathione peroxidase family.

The protein resides in the membrane. The catalysed reaction is 2 glutathione + H2O2 = glutathione disulfide + 2 H2O. This Danio rerio (Zebrafish) protein is Probable glutathione peroxidase 8 (gpx8).